The following is a 113-amino-acid chain: Hydrogenase maturation factor HypA (113 aa).

Histidine 2 is a binding site for Ni(2+). The Zn(2+) site is built by cysteine 73, cysteine 76, cysteine 89, and cysteine 92.

This sequence belongs to the HypA/HybF family.

Its function is as follows. Involved in the maturation of [NiFe] hydrogenases. Required for nickel insertion into the metal center of the hydrogenase. The protein is Hydrogenase maturation factor HypA of Picosynechococcus sp. (strain ATCC 27264 / PCC 7002 / PR-6) (Agmenellum quadruplicatum).